Reading from the N-terminus, the 118-residue chain is Ribulose bisphosphate carboxylase small subunit 2 (118 aa).

The protein belongs to the RuBisCO small chain family. As to quaternary structure, heterohexadecamer of 8 large and 8 small subunits.

In terms of biological role, ruBisCO catalyzes two reactions: the carboxylation of D-ribulose 1,5-bisphosphate, the primary event in carbon dioxide fixation, as well as the oxidative fragmentation of the pentose substrate. Both reactions occur simultaneously and in competition at the same active site. Although the small subunit is not catalytic it is essential for maximal activity. The chain is Ribulose bisphosphate carboxylase small subunit 2 from Acidithiobacillus ferrooxidans (Thiobacillus ferrooxidans).